Consider the following 592-residue polypeptide: PiggyBac transposable element-derived protein 2 (592 aa).

Positions 31–69 (EEEESNNNREEIFIAPPDNAAGEFTDEDSGDEDSQRGAH) are disordered.

The polypeptide is PiggyBac transposable element-derived protein 2 (PGBD2) (Homo sapiens (Human)).